The chain runs to 874 residues: Probable inorganic carbon transporter subunit DabA (874 aa).

The Zn(2+) site is built by cysteine 398, aspartate 400, histidine 580, and cysteine 595.

The protein belongs to the inorganic carbon transporter (TC 9.A.2) DabA family. As to quaternary structure, forms a complex with DabB. The cofactor is Zn(2+).

It localises to the cell membrane. In terms of biological role, part of an energy-coupled inorganic carbon pump. The chain is Probable inorganic carbon transporter subunit DabA from Bacillus cereus (strain ATCC 10987 / NRS 248).